A 292-amino-acid chain; its full sequence is Homoserine kinase (292 aa).

Residue 80-90 (PLARGLGSSSS) coordinates ATP.

Belongs to the GHMP kinase family. Homoserine kinase subfamily.

It is found in the cytoplasm. The catalysed reaction is L-homoserine + ATP = O-phospho-L-homoserine + ADP + H(+). It participates in amino-acid biosynthesis; L-threonine biosynthesis; L-threonine from L-aspartate: step 4/5. In terms of biological role, catalyzes the ATP-dependent phosphorylation of L-homoserine to L-homoserine phosphate. This chain is Homoserine kinase, found in Leuconostoc mesenteroides subsp. mesenteroides (strain ATCC 8293 / DSM 20343 / BCRC 11652 / CCM 1803 / JCM 6124 / NCDO 523 / NBRC 100496 / NCIMB 8023 / NCTC 12954 / NRRL B-1118 / 37Y).